Here is a 132-residue protein sequence, read N- to C-terminus: Small ribosomal subunit protein uS8 (132 aa).

Belongs to the universal ribosomal protein uS8 family. Part of the 30S ribosomal subunit. Contacts proteins S5 and S12.

Its function is as follows. One of the primary rRNA binding proteins, it binds directly to 16S rRNA central domain where it helps coordinate assembly of the platform of the 30S subunit. This is Small ribosomal subunit protein uS8 from Rickettsia canadensis (strain McKiel).